Consider the following 778-residue polypeptide: Aconitate hydratase, mitochondrial (778 aa).

Residues 1-16 (MLSARSAIKRPIVRGL) constitute a mitochondrion transit peptide. Residues Gln-95 and 188–190 (DSH) each bind substrate. Cys-382 is a binding site for [4Fe-4S] cluster. Ser-391 is modified (phosphoserine). Thr-409 is subject to Phosphothreonine. 2 residues coordinate [4Fe-4S] cluster: Cys-445 and Cys-448. Positions 471 and 476 each coordinate substrate. A Phosphoserine modification is found at Ser-556. Residues Arg-604 and 667–668 (SR) contribute to the substrate site.

It belongs to the aconitase/IPM isomerase family. In terms of assembly, monomer. Binds to mitochondrial DNA (mtDNA) and identified as component of mitochondrial nucleoids. Requires [4Fe-4S] cluster as cofactor.

It is found in the mitochondrion. Its subcellular location is the cytoplasm. The enzyme catalyses citrate = D-threo-isocitrate. The protein operates within carbohydrate metabolism; tricarboxylic acid cycle; isocitrate from oxaloacetate: step 2/2. Its activity is regulated as follows. Subject to catabolite regulation. Catalyzes the isomerization of citrate to isocitrate via cis-aconitate, a step in the citric acid cycle. Can also provide minor contributions to the reversible dehydration of (R)-homocitrate to cis-homoaconitate, a step in the alpha-aminoadipate pathway for lysine biosynthesis. Also plays an essential role in mtDNA maintenance. May directly protect mtDNA from accumulation of point mutations and ssDNA breaks as a component of mitochondrial nucleoids, or by preventing accumulation of iron citrate thereby alleviating its detrimental effects in mitochondria. The protein is Aconitate hydratase, mitochondrial of Saccharomyces cerevisiae (strain ATCC 204508 / S288c) (Baker's yeast).